A 731-amino-acid polypeptide reads, in one-letter code: Wall-associated receptor kinase-like 5 (731 aa).

Positions 1 to 26 (MKTKTYRFVCLVASVLTLQLMNGSSA) are cleaved as a signal peptide. The Extracellular portion of the chain corresponds to 27-360 (ATPPPPPNSK…PAKPLVLQGV (334 aa)). N37, N43, N73, N96, N124, N137, N236, and N272 each carry an N-linked (GlcNAc...) asparagine glycan. The segment at 285–342 (CLCEYGYFSEMSYRNCYCSLGFTGNPYLRGGCIDNDDCKGPNICEEGTCVNVPGGYRC) is atypical EGF-like. Disulfide bonds link C287–C300, C322–C333, and C328–C342. Residues 361–381 (LLGLMGLLFLVVGTLGLIIFI) traverse the membrane as a helical segment. The Cytoplasmic segment spans residues 382–731 (KKRRRIISSR…EDQVMEISRE (350 aa)). The 274-residue stretch at 432–705 (FSVKRVLGKG…REASLELERI (274 aa)) folds into the Protein kinase domain. ATP contacts are provided by residues 438 to 446 (LGKGSQGTV) and K460. Residue Y505 is modified to Phosphotyrosine. The Proton acceptor role is filled by D557. A phosphothreonine mark is found at T591 and T596. Y604 is modified (phosphotyrosine). The interval 709-731 (PEDLEAHIENDDEEDQVMEISRE) is disordered.

Belongs to the protein kinase superfamily. Ser/Thr protein kinase family. Preferentially expressed in roots and flowers.

Its subcellular location is the membrane. The catalysed reaction is L-seryl-[protein] + ATP = O-phospho-L-seryl-[protein] + ADP + H(+). It catalyses the reaction L-threonyl-[protein] + ATP = O-phospho-L-threonyl-[protein] + ADP + H(+). In terms of biological role, serine/threonine-protein kinase that may function as a signaling receptor of extracellular matrix component. May be involved in plant's response to pathogen infection. This chain is Wall-associated receptor kinase-like 5 (WAKL5), found in Arabidopsis thaliana (Mouse-ear cress).